The sequence spans 349 residues: Green-sensitive opsin-3 (349 aa).

The Extracellular portion of the chain corresponds to 1 to 36 (MNGTEGNNFYIPMSNRTGLVRSPYEYPQYYLAEPWQ). 2 N-linked (GlcNAc...) asparagine glycosylation sites follow: asparagine 2 and asparagine 15. Residues 37-61 (FKLLAVYMFFLMCFGFPINGLTLVV) traverse the membrane as a helical segment. Residues 62-73 (TAQHKKLRQPLN) lie on the Cytoplasmic side of the membrane. Residues 74 to 99 (FILVNLAVAGTIMVCFGFTVTFYTAI) traverse the membrane as a helical segment. The Extracellular portion of the chain corresponds to 100-113 (NGYFVLGPTGCAIE). Cysteines 110 and 187 form a disulfide. A helical transmembrane segment spans residues 114 to 133 (GFMATLGGQISLWSLVVLAI). Residues 134-152 (ERYIVVCKPMGSFKFSSNH) lie on the Cytoplasmic side of the membrane. A helical transmembrane segment spans residues 153-176 (AFAGIGFTWIMALSCAAPPLVGWS). Residues 177–202 (RYIPEGMQCSCGPDYYTLNPDYNNES) lie on the Extracellular side of the membrane. The N-linked (GlcNAc...) asparagine glycan is linked to asparagine 200. The chain crosses the membrane as a helical span at residues 203–230 (YVLYMFCCHFIFPVTTIFFTYGRLVCTV). Topologically, residues 231–252 (KAAAAQQQESESTQKAEREVTR) are cytoplasmic. The helical transmembrane segment at 253 to 276 (MVILMVLGFLVAWTPYASVAAWIF) threads the bilayer. Topologically, residues 277–284 (FNRGAAFS) are extracellular. The chain crosses the membrane as a helical span at residues 285 to 309 (AQFMAVPAFFSKSSSIFNPIIYVLL). N6-(retinylidene)lysine is present on lysine 296. Residues 310–349 (NKQFRNCMLTTLFCGKNPLGDDESSTVSTSKTEVSSVSPA) are Cytoplasmic-facing. Residues 329–349 (GDDESSTVSTSKTEVSSVSPA) are disordered. Positions 334–349 (STVSTSKTEVSSVSPA) are enriched in low complexity.

It belongs to the G-protein coupled receptor 1 family. Opsin subfamily. Post-translationally, phosphorylated on some or all of the serine and threonine residues present in the C-terminal region.

It localises to the membrane. Functionally, visual pigments are the light-absorbing molecules that mediate vision. They consist of an apoprotein, opsin, covalently linked to cis-retinal. The chain is Green-sensitive opsin-3 (opn1mw3) from Danio rerio (Zebrafish).